A 689-amino-acid polypeptide reads, in one-letter code: Elongation factor G (689 aa).

The 275-residue stretch at 9-283 (AKFRNIGIMA…AIIEFMPSPL (275 aa)) folds into the tr-type G domain. Residues 18–25 (AHIDAGKT), 82–86 (DTPGH), and 136–139 (NKMD) each bind GTP.

Belongs to the TRAFAC class translation factor GTPase superfamily. Classic translation factor GTPase family. EF-G/EF-2 subfamily.

It localises to the cytoplasm. In terms of biological role, catalyzes the GTP-dependent ribosomal translocation step during translation elongation. During this step, the ribosome changes from the pre-translocational (PRE) to the post-translocational (POST) state as the newly formed A-site-bound peptidyl-tRNA and P-site-bound deacylated tRNA move to the P and E sites, respectively. Catalyzes the coordinated movement of the two tRNA molecules, the mRNA and conformational changes in the ribosome. This is Elongation factor G from Clostridium botulinum (strain ATCC 19397 / Type A).